The primary structure comprises 53 residues: YTSIKPLGDRVAEAEEKTAGGLLLTETTKEKPSIGTVIAVGPGSLDEEGKITP.

2 cpn-10 domain regions span residues 1–10 and 11–53; these read YTSIKPLGDR and VAEA…KITP.

This sequence belongs to the GroES chaperonin family. Forms stable complexes with cpn60 in the presence of ATP. Homotetramer.

Its subcellular location is the plastid. The protein resides in the chloroplast. Its function is as follows. Seems to function only as a co-chaperone, along with cpn60, and in certain cases is essential for the discharge of biologically active proteins from cpn60. This chain is 20 kDa chaperonin, found in Populus euphratica (Euphrates poplar).